Consider the following 170-residue polypeptide: Aspartate 1-decarboxylase (170 aa).

The Schiff-base intermediate with substrate; via pyruvic acid role is filled by Ser25. At Ser25 the chain carries Pyruvic acid (Ser). Substrate is bound at residue Thr57. The active-site Proton donor is Tyr58. 73–75 (GAA) is a substrate binding site. The segment at 118-170 (GHDPAEALPDDPSSLRGDLAVPGNPVTAAARRGTPTHQAPVALPASRTVVAPR) is disordered.

It belongs to the PanD family. Heterooctamer of four alpha and four beta subunits. The cofactor is pyruvate. Is synthesized initially as an inactive proenzyme, which is activated by self-cleavage at a specific serine bond to produce a beta-subunit with a hydroxyl group at its C-terminus and an alpha-subunit with a pyruvoyl group at its N-terminus.

It is found in the cytoplasm. The enzyme catalyses L-aspartate + H(+) = beta-alanine + CO2. It participates in cofactor biosynthesis; (R)-pantothenate biosynthesis; beta-alanine from L-aspartate: step 1/1. Its function is as follows. Catalyzes the pyruvoyl-dependent decarboxylation of aspartate to produce beta-alanine. The polypeptide is Aspartate 1-decarboxylase (Frankia alni (strain DSM 45986 / CECT 9034 / ACN14a)).